Here is a 94-residue protein sequence, read N- to C-terminus: uncharacterized protein (94 aa).

Its function is as follows. Could be a silencing control element for the regulation of the restriction system. This is an uncharacterized protein from Herpetosiphon aurantiacus (Herpetosiphon giganteus).